A 711-amino-acid polypeptide reads, in one-letter code: Toxin RTX-III translocation ATP-binding protein (711 aa).

Residues 1 to 129 enclose the Peptidase C39 domain; that stretch reads MESQMPFNEK…EIFQGGMILI (129 aa). Residue His-87 is part of the active site. One can recognise an ABC transmembrane type-1 domain in the interval 158 to 440; sequence FVETIIVSIF…LAQLWQDFQQ (283 aa). 5 consecutive transmembrane segments (helical) span residues 162–182, 195–215, 273–293, 299–319, and 392–412; these read IIVS…FQVV, LNVI…LSGL, ALTS…MWYY, IVIL…SPIL, and VMII…LSIG. An ABC transporter domain is found at 472–707; that stretch reads IAFKHIRFRY…ENGLYYYLNQ (236 aa). 506-513 contributes to the ATP binding site; sequence GRSGSGKS.

This sequence belongs to the ABC transporter superfamily. Protein-1 exporter (TC 3.A.1.109) family. As to quaternary structure, homodimer.

Its subcellular location is the cell membrane. In terms of biological role, involved in the transport of the toxin RTX-III. The chain is Toxin RTX-III translocation ATP-binding protein (apxIIIB) from Actinobacillus pleuropneumoniae (Haemophilus pleuropneumoniae).